Here is a 132-residue protein sequence, read N- to C-terminus: Large ribosomal subunit protein bL20c (132 aa).

It belongs to the bacterial ribosomal protein bL20 family.

The protein resides in the plastid. It localises to the chloroplast. Functionally, binds directly to 23S ribosomal RNA and is necessary for the in vitro assembly process of the 50S ribosomal subunit. It is not involved in the protein synthesizing functions of that subunit. This is Large ribosomal subunit protein bL20c from Coffea arabica (Arabian coffee).